A 174-amino-acid polypeptide reads, in one-letter code: Methylamine utilization protein MauL (174 aa).

Its pathway is one-carbon metabolism; methylamine degradation. Functionally, probably involved in TTQ prosthetic group biosynthesis. The polypeptide is Methylamine utilization protein MauL (mauL) (Methylophilus methylotrophus (Bacterium W3A1)).